A 268-amino-acid polypeptide reads, in one-letter code: Purine nucleoside phosphorylase (268 aa).

Phosphate is bound by residues S36, H68, 88–90 (RIH), and A120. E189 lines the a purine D-ribonucleoside pocket. Phosphate is bound at residue S208. Residue N231 coordinates a purine D-ribonucleoside.

Belongs to the PNP/MTAP phosphorylase family. As to quaternary structure, homotrimer.

It carries out the reaction a purine 2'-deoxy-D-ribonucleoside + phosphate = a purine nucleobase + 2-deoxy-alpha-D-ribose 1-phosphate. Its pathway is purine metabolism; purine nucleoside salvage. Its function is as follows. The purine nucleoside phosphorylases catalyze the phosphorolytic breakdown of the N-glycosidic bond in the beta-(deoxy)ribonucleoside molecules, with the formation of the corresponding free purine bases and pentose-1-phosphate. Cleaves guanosine, inosine, 2'-deoxyguanosine and 2'-deoxyinosine. This Mycobacterium leprae (strain TN) protein is Purine nucleoside phosphorylase (punA).